The sequence spans 138 residues: Small ribosomal subunit protein uS9 (138 aa).

Residues 100–118 are compositionally biased toward basic and acidic residues; sequence PENRPPLKTEGYLTRDPRA. The segment at 100–138 is disordered; that stretch reads PENRPPLKTEGYLTRDPRAKERKKYGLHKARKAPQYSKR. Positions 119 to 138 are enriched in basic residues; the sequence is KERKKYGLHKARKAPQYSKR.

It belongs to the universal ribosomal protein uS9 family.

This chain is Small ribosomal subunit protein uS9, found in Trichormus variabilis (strain ATCC 29413 / PCC 7937) (Anabaena variabilis).